The following is a 531-amino-acid chain: NAD(P)H-quinone oxidoreductase chain 4 (531 aa).

14 helical membrane passes run 9-29 (FPWLSASILFPIGSAFVIPFF), 41-61 (FALSIALITFLITVGSYINGF), 93-113 (MPLILLTSFITALAVLAAWPV), 117-137 (PKLFFFLILVMDGGQIAVFAV), 141-161 (LLFFLTWELELIPVYLLLAIW), 173-193 (FIIYTAGSSIFILLAALAMGF), 217-237 (IFCYVGLLIAFGVKLPIVPLH), 248-268 (TAPVHMLLAGILLKMGGYALL), 282-302 (FAPLLIVLGVVNIIYAALTSF), 311-331 (IAYSSISHMGFVLIGIGSFSS), 337-357 (AMLQMVSHGLIGASLFFLVGA), 381-401 (FALWTACSLASLALPGMSGFV), 422-442 (VVMASLAAIGVILTPIYLLSM), and 469-489 (VYIIACLLLPIIGIGLYPRLV).

This sequence belongs to the complex I subunit 4 family.

The protein localises to the cellular thylakoid membrane. The enzyme catalyses a plastoquinone + NADH + (n+1) H(+)(in) = a plastoquinol + NAD(+) + n H(+)(out). The catalysed reaction is a plastoquinone + NADPH + (n+1) H(+)(in) = a plastoquinol + NADP(+) + n H(+)(out). NDH-1 shuttles electrons from NAD(P)H, via FMN and iron-sulfur (Fe-S) centers, to quinones in the respiratory chain. The immediate electron acceptor for the enzyme in this species is believed to be plastoquinone. Couples the redox reaction to proton translocation (for every two electrons transferred, four hydrogen ions are translocated across the cytoplasmic membrane), and thus conserves the redox energy in a proton gradient. The sequence is that of NAD(P)H-quinone oxidoreductase chain 4 from Prochlorococcus marinus (strain MIT 9301).